We begin with the raw amino-acid sequence, 806 residues long: Transitional endoplasmic reticulum ATPase (806 aa).

Ala-2 carries the N-acetylalanine modification. A phosphoserine mark is found at Ser-3 and Ser-7. Lys-8 participates in a covalent cross-link: Glycyl lysine isopeptide (Lys-Gly) (interchain with G-Cter in SUMO2). Ser-13 is modified (phosphoserine). Lys-18 is covalently cross-linked (Glycyl lysine isopeptide (Lys-Gly) (interchain with G-Cter in SUMO2)). At Ser-37 the chain carries Phosphoserine. Residue 247 to 253 participates in ATP binding; it reads PGTGKTL. Lys-315 carries the post-translational modification N6,N6,N6-trimethyllysine; by VCPKMT. The ATP site is built by Asn-348 and His-384. Thr-436 bears the Phosphothreonine mark. The residue at position 462 (Ser-462) is a Phosphoserine. Residues Lys-502 and Lys-505 each carry the N6-acetyllysine modification. 521–526 contacts ATP; that stretch reads GCGKTL. Lys-668 bears the N6-acetyllysine; alternate mark. Lys-668 carries the N6-succinyllysine; alternate modification. Ser-702 is subject to Phosphoserine. The segment at 708-727 is disordered; sequence RRERERQTNPSAMEVEEDDP. N6-acetyllysine is present on Lys-754. The tract at residues 768–806 is disordered; the sequence is FGSFRFPSGNQGGAGPSQGSGGGTGGSVYTEDNDDDLYG. Residues Ser-770, Ser-775, and Ser-787 each carry the phosphoserine modification. The segment covering 777–793 has biased composition (gly residues); the sequence is NQGGAGPSQGSGGGTGG. An interaction with UBXN6 region spans residues 797–806; it reads TEDNDDDLYG. Position 805 is a phosphotyrosine (Tyr-805).

The protein belongs to the AAA ATPase family. As to quaternary structure, homohexamer. Forms a ring-shaped particle of 12.5 nm diameter, that displays 6-fold radial symmetry. Part of a ternary complex containing STX5A, NSFL1C and VCP. NSFL1C forms a homotrimer that binds to one end of a VCP homohexamer. The complex binds to membranes enriched in phosphatidylethanolamine-containing lipids and promotes Golgi membrane fusion. Binds to a heterodimer of NPLOC4 and UFD1, binding to this heterodimer inhibits Golgi-membrane fusion. Interaction with VCIP135 leads to dissociation of the complex via ATP hydrolysis by VCP. Part of a ternary complex containing NPLOC4, UFD1 and VCP. Interacts with NSFL1C-like protein p37; the complex has membrane fusion activity and is required for Golgi and endoplasmic reticulum biogenesis. Interacts with SELENOS and SYVN1, as well as with DERL1 (via SHP-box motif), DERL2 and DERL3; which probably transfer misfolded proteins from the ER to VCP. Interacts with SVIP and DERL1. Component of a complex required to couple retrotranslocation, ubiquitination and deglycosylation composed of NGLY1, SAKS1, AMFR, VCP and RAD23B. Part of a complex composed of STUB1/CHIP, VCP/p97, CHRNA3, and UBXN2A that modulates the ubiquitination and endoplasmic reticulum-associated degradation (ERAD) of CHRNA3. Within the complex UBXN2A acts as a scaffold protein required for the interaction of CHRNA3 with VCP/p97, this interaction also inhibits CHRNA3 ubiquitination by STUB1/CHIP and subsequently ERAD. Interacts with UBXN2A (via UBX domain); the interaction is required for the interaction of CHRNA3 in the STUB1-VCP-UBXN2A complex. Directly interacts with UBXN4 and RNF19A. Interacts with CASR. Interacts with UBE4B and YOD1. Interacts with clathrin. Interacts with RNF103. Interacts with TRIM13 and TRIM21. Component of a VCP/p97-AMFR/gp78 complex that participates in the final step of the endoplasmic reticulum-associated degradation (ERAD) of HMGCR. Interacts directly with AMFR/gp78 (via its VIM). Interacts with RHBDD1 (via C-terminal domain). Interacts with SPRTN; leading to recruitment to stalled replication forks. Interacts with WASHC5. Interacts with UBOX5. Interacts (via N-terminus) with UBXN7, UBXN8, and probably several other UBX domain-containing proteins (via UBX domains); the interactions are mutually exclusive with VIM-dependent interactions such as those with AMFR and SELENOS. Forms a complex with UBQLN1 and UBXN4. Interacts (via the PIM motif) with RNF31 (via the PUB domain). Interacts with RIGI and RNF125; interaction takes place when RIGI is ubiquitinated via 'Lys-63'-linked ubiquitin on its CARD domains, leading to recruit RNF125 and promote ubiquitination and degradation of RIGI. Interacts with BAG6. Interacts with UBXN10. Interacts with UBXN6; the interaction with UBXN6 is direct and competitive with UFD1. Forms a ternary complex with CAV1 and UBXN6. Interacts with PLAA, UBXN6 and YOD1; may form a complex involved in macroautophagy. Interacts with ANKZF1. Interacts with ubiquitin-binding protein FAF1. Interacts with ZFAND2B (via VIM motif); the interaction is direct. Interacts with ZFAND1 (via its ubiquitin-like region); this interaction occurs in an arsenite-dependent manner. Interacts with CCDC47. Interacts with LMBR1L and UBAC2. Interacts with ATXN3. Interacts with TEX264; bridging VCP to covalent DNA-protein cross-links (DPCs). Mg(2+) serves as cofactor. In terms of processing, ISGylated. Post-translationally, methylation at Lys-315 catalyzed by VCPKMT is increased in the presence of ASPSCR1. Lys-315 methylation may decrease ATPase activity. Phosphorylated by tyrosine kinases in response to T-cell antigen receptor activation. Phosphorylated in mitotic cells.

The protein resides in the cytoplasm. The protein localises to the cytosol. Its subcellular location is the endoplasmic reticulum. It localises to the nucleus. It is found in the stress granule. The enzyme catalyses ATP + H2O = ADP + phosphate + H(+). Necessary for the fragmentation of Golgi stacks during mitosis and for their reassembly after mitosis. Involved in the formation of the transitional endoplasmic reticulum (tER). The transfer of membranes from the endoplasmic reticulum to the Golgi apparatus occurs via 50-70 nm transition vesicles which derive from part-rough, part-smooth transitional elements of the endoplasmic reticulum (tER). Vesicle budding from the tER is an ATP-dependent process. The ternary complex containing UFD1, VCP and NPLOC4 binds ubiquitinated proteins and is necessary for the export of misfolded proteins from the ER to the cytoplasm, where they are degraded by the proteasome. The NPLOC4-UFD1-VCP complex regulates spindle disassembly at the end of mitosis and is necessary for the formation of a closed nuclear envelope. Regulates E3 ubiquitin-protein ligase activity of RNF19A. Component of the VCP/p97-AMFR/gp78 complex that participates in the final step of the sterol-mediated ubiquitination and endoplasmic reticulum-associated degradation (ERAD) of HMGCR. Mediates the endoplasmic reticulum-associated degradation of CHRNA3 in cortical neurons as part of the STUB1-VCP-UBXN2A complex. Involved in endoplasmic reticulum stress-induced pre-emptive quality control, a mechanism that selectively attenuates the translocation of newly synthesized proteins into the endoplasmic reticulum and reroutes them to the cytosol for proteasomal degradation. Involved in clearance process by mediating G3BP1 extraction from stress granules. Also involved in DNA damage response: recruited to double-strand breaks (DSBs) sites in a RNF8- and RNF168-dependent manner and promotes the recruitment of TP53BP1 at DNA damage sites. Recruited to stalled replication forks by SPRTN: may act by mediating extraction of DNA polymerase eta (POLH) to prevent excessive translesion DNA synthesis and limit the incidence of mutations induced by DNA damage. Together with SPRTN metalloprotease, involved in the repair of covalent DNA-protein cross-links (DPCs) during DNA synthesis. Involved in interstrand cross-link repair in response to replication stress by mediating unloading of the ubiquitinated CMG helicase complex. Mediates extraction of PARP1 trapped to chromatin: recognizes and binds ubiquitinated PARP1 and promotes its removal. Required for cytoplasmic retrotranslocation of stressed/damaged mitochondrial outer-membrane proteins and their subsequent proteasomal degradation. Essential for the maturation of ubiquitin-containing autophagosomes and the clearance of ubiquitinated protein by autophagy. Acts as a negative regulator of type I interferon production by interacting with RIGI: interaction takes place when RIGI is ubiquitinated via 'Lys-63'-linked ubiquitin on its CARD domains, leading to recruit RNF125 and promote ubiquitination and degradation of RIGI. May play a role in the ubiquitin-dependent sorting of membrane proteins to lysosomes where they undergo degradation. May more particularly play a role in caveolins sorting in cells. By controlling the steady-state expression of the IGF1R receptor, indirectly regulates the insulin-like growth factor receptor signaling pathway. In Sus scrofa (Pig), this protein is Transitional endoplasmic reticulum ATPase (VCP).